The chain runs to 695 residues: Elongation factor G 2 (695 aa).

A tr-type G domain is found at 5-280 (SLYRNIGIFA…AVVDYLPSPT (276 aa)). Residues 14-21 (AHVDAGKT), 78-82 (DTPGH), and 132-135 (NKLD) each bind GTP.

It belongs to the TRAFAC class translation factor GTPase superfamily. Classic translation factor GTPase family. EF-G/EF-2 subfamily.

The protein resides in the cytoplasm. Catalyzes the GTP-dependent ribosomal translocation step during translation elongation. During this step, the ribosome changes from the pre-translocational (PRE) to the post-translocational (POST) state as the newly formed A-site-bound peptidyl-tRNA and P-site-bound deacylated tRNA move to the P and E sites, respectively. Catalyzes the coordinated movement of the two tRNA molecules, the mRNA and conformational changes in the ribosome. The protein is Elongation factor G 2 of Vibrio cholerae serotype O1 (strain ATCC 39315 / El Tor Inaba N16961).